The primary structure comprises 116 residues: Aspartate 1-decarboxylase (116 aa).

Ser25 (schiff-base intermediate with substrate; via pyruvic acid) is an active-site residue. Position 25 is a pyruvic acid (Ser) (Ser25). Substrate is bound at residue Thr57. Catalysis depends on Tyr58, which acts as the Proton donor. 73–75 (GAA) contributes to the substrate binding site.

Belongs to the PanD family. As to quaternary structure, heterooctamer of four alpha and four beta subunits. It depends on pyruvate as a cofactor. Post-translationally, is synthesized initially as an inactive proenzyme, which is activated by self-cleavage at a specific serine bond to produce a beta-subunit with a hydroxyl group at its C-terminus and an alpha-subunit with a pyruvoyl group at its N-terminus.

Its subcellular location is the cytoplasm. The enzyme catalyses L-aspartate + H(+) = beta-alanine + CO2. The protein operates within cofactor biosynthesis; (R)-pantothenate biosynthesis; beta-alanine from L-aspartate: step 1/1. Catalyzes the pyruvoyl-dependent decarboxylation of aspartate to produce beta-alanine. In Syntrophus aciditrophicus (strain SB), this protein is Aspartate 1-decarboxylase.